Here is a 652-residue protein sequence, read N- to C-terminus: MTIAILPARLANQIAAGEVVERPASVIKELIENSLDAGATSIHIDVDKGGIKKIKITDNGHGIVKEELTLALSRHATSKIKSLNDLEAIGSLGFRGEALASISSVARLTLTSKPQSQATAWQAVAEGRDMSVNIKPAAHPDGTSIEVLDLFFNTPARRKFLRTEKTEFNHIDEVVRRIALAHFEVSFSLTHNGNTVRQYRMASTHAQCIKRVAMVCGPKFIEHAVEVDCPHDNMTLSGWLAKPSFSRSQNDLCYSYVNGRMMRDKLINHAIRQAYADLLPPDTYPAFVLFLQLDHREVDVNVHPSKHEVRFHQSRYVHDFIYSVCHKALTSALAGEELFTTADSDLALVPEQSYSSLGANDRQGSHSSNTPTLNYPSADYIRPLQHVNDASNSQSTSSYSGYGQQHKTNAISKIAASNYQALMTPDKGSSAQVQNTSGSDQASAQKHETTTLQNSTDQSAFLSVHQPGYALYKTENGVRVLSLFKLAKSTYGKLVEQSWQNKTEQSDCPVECLVSQPLLLPVILSLSEQQLSFVLAEQEILSNAGIVFIQQHKNKIQIRQFPALLREQDVSNALIIIIEELIEKRSFTEGEALCETNLHQSIGLAMVLAEYDETQADILLRLTKKLFHEQLSQQLLLNSIPLDLTSHIKTLF.

2 disordered regions span residues 357–377 (LGAN…NYPS) and 425–457 (PDKG…NSTD). Residues 365–375 (SHSSNTPTLNY) show a composition bias toward polar residues.

It belongs to the DNA mismatch repair MutL/HexB family.

This protein is involved in the repair of mismatches in DNA. It is required for dam-dependent methyl-directed DNA mismatch repair. May act as a 'molecular matchmaker', a protein that promotes the formation of a stable complex between two or more DNA-binding proteins in an ATP-dependent manner without itself being part of a final effector complex. This Colwellia psychrerythraea (strain 34H / ATCC BAA-681) (Vibrio psychroerythus) protein is DNA mismatch repair protein MutL.